The primary structure comprises 226 residues: 2,3-bisphosphoglycerate-dependent phosphoglycerate mutase (226 aa).

Residues 8–15 (RHGQSVWN), 21–22 (TG), Arg-58, 109–112 (ERMY), Lys-120, 136–137 (RR), and 180–181 (GN) contribute to the substrate site. His-9 functions as the Tele-phosphohistidine intermediate in the catalytic mechanism. Residue Glu-109 is the Proton donor/acceptor of the active site.

Belongs to the phosphoglycerate mutase family. BPG-dependent PGAM subfamily.

The enzyme catalyses (2R)-2-phosphoglycerate = (2R)-3-phosphoglycerate. The protein operates within carbohydrate degradation; glycolysis; pyruvate from D-glyceraldehyde 3-phosphate: step 3/5. Functionally, catalyzes the interconversion of 2-phosphoglycerate and 3-phosphoglycerate. The sequence is that of 2,3-bisphosphoglycerate-dependent phosphoglycerate mutase from Chlamydia trachomatis serovar L2 (strain ATCC VR-902B / DSM 19102 / 434/Bu).